We begin with the raw amino-acid sequence, 173 residues long: Large ribosomal subunit protein uL29c (173 aa).

The transit peptide at 1–60 (MLSLSIATPGTAAIFRRGTASATSTSSSFHGVRIQHQVSARVPAAATISSSSPKPSVVMM) directs the protein to the chloroplast. The segment at 143–173 (KKSIVPRPPPSLKKLQEEEAAEEAAEAAKSA) is disordered. S172 is modified (phosphoserine).

The protein belongs to the universal ribosomal protein uL29 family. Part of the 50S ribosomal subunit.

The protein localises to the plastid. Its subcellular location is the chloroplast. In Arabidopsis thaliana (Mouse-ear cress), this protein is Large ribosomal subunit protein uL29c (RPL29).